Here is a 613-residue protein sequence, read N- to C-terminus: MEKIYVKIYELSGLEDKDNFSCYIKIYWQNKKYKSCILQKNPYKFNEIFLLPIDIKNNVKDEKNNILSIEVWSSGILNNNKIAYTFFELDHIRRERISSEKINLIDVVKKCTLQISVHIINNNQDILFCNIKDIFGNNKNDKEIHDAILKYGGNERHIIKELRKEKEIGQYNNIYFNDYVNVLNTDPSQNYIYNDMPKITPNNIYNNMNNDQTNHTYLKAPNSLYNNENTIYSSNVHYSTYMNNSPTYKNSNNMNHVTNMYASNDLHNSNHFKPHSNAYSTINYDNNNYIYPQNHTNIYNRASPGSDQTLYFSPCNQKKALLIGINYYGTKYELNGCTNDTLRMKDLLVTKYKFYDSSNNIVRLIDNEANPNYRPTRRNILSALMWLTRDNKPGDILFFLFSGHGSQEKDHNHIEKDGYNESILPSDFETEGVIIDDELHKYLIQPLNEGVKLIAVVDSCNSGSSIDLAYKYKLKSKKWKEDKNPFHVICDVTQFSGCKDKEVSYEVNTGQIAPGGSLVTAMVQILKNNMNTPSIITYEYLLHNIHAHVKQHSNQTVTFMSSQKFNMNRLFDFEHIIKNKNNQLGQIINKYIEKNKSKNKNKLKHELKNLFFF.

Active-site residues include H404 and C460.

It belongs to the peptidase C14B family. Monomer.

Activated by Ca(2+). Functionally, cysteine protease that cleaves specifically after arginine or lysine residues. May play a role in apoptosis. This is Metacaspase-1 from Plasmodium falciparum (isolate 3D7).